The following is a 328-amino-acid chain: Fructose-1,6-bisphosphatase class 1 (328 aa).

Positions 91, 110, 112, and 113 each coordinate Mg(2+). Residues 113 to 116, asparagine 205, and 257 to 259 contribute to the substrate site; these read DGSS and YLY. Position 277 (glutamate 277) interacts with Mg(2+).

It belongs to the FBPase class 1 family. Homotetramer. Mg(2+) is required as a cofactor.

The protein resides in the cytoplasm. The enzyme catalyses beta-D-fructose 1,6-bisphosphate + H2O = beta-D-fructose 6-phosphate + phosphate. It participates in carbohydrate biosynthesis; gluconeogenesis. This chain is Fructose-1,6-bisphosphatase class 1, found in Azorhizobium caulinodans (strain ATCC 43989 / DSM 5975 / JCM 20966 / LMG 6465 / NBRC 14845 / NCIMB 13405 / ORS 571).